We begin with the raw amino-acid sequence, 395 residues long: ATP phosphoribosyltransferase regulatory subunit (395 aa).

It belongs to the class-II aminoacyl-tRNA synthetase family. HisZ subfamily. As to quaternary structure, heteromultimer composed of HisG and HisZ subunits.

The protein localises to the cytoplasm. Its pathway is amino-acid biosynthesis; L-histidine biosynthesis; L-histidine from 5-phospho-alpha-D-ribose 1-diphosphate: step 1/9. In terms of biological role, required for the first step of histidine biosynthesis. May allow the feedback regulation of ATP phosphoribosyltransferase activity by histidine. This is ATP phosphoribosyltransferase regulatory subunit from Pseudomonas syringae pv. tomato (strain ATCC BAA-871 / DC3000).